The primary structure comprises 519 residues: Acetylcholine receptor subunit beta-like 2 (519 aa).

Positions 1–18 (MWHWSLLCVFLLVPLANS) are cleaved as a signal peptide. Residues 19–244 (TAPISFEANP…ITFKLTMRRK (226 aa)) lie on the Extracellular side of the membrane. Residue asparagine 50 is glycosylated (N-linked (GlcNAc...) asparagine). An intrachain disulfide couples cysteine 154 to cysteine 168. 3 helical membrane passes run 245-269 (TLFY…VFYL), 277-295 (VTLC…LLLA), and 311-332 (YLLF…VLNI). The Cytoplasmic segment spans residues 333–462 (HFRSPSTHNM…WKFVSMVLDR (130 aa)). A helical membrane pass occupies residues 463-481 (FFLWLFTLSCVFGTLAIIC).

This sequence belongs to the ligand-gated ion channel (TC 1.A.9) family. Acetylcholine receptor (TC 1.A.9.1) subfamily. In terms of tissue distribution, CNS in embryos.

The protein localises to the postsynaptic cell membrane. The protein resides in the cell membrane. In terms of biological role, after binding acetylcholine, the AChR responds by an extensive change in conformation that affects all subunits and leads to opening of an ion-conducting channel across the plasma membrane. The protein is Acetylcholine receptor subunit beta-like 2 (nAChRbeta2) of Drosophila melanogaster (Fruit fly).